Consider the following 139-residue polypeptide: Putative pre-16S rRNA nuclease (139 aa).

The protein belongs to the YqgF nuclease family.

It localises to the cytoplasm. Could be a nuclease involved in processing of the 5'-end of pre-16S rRNA. The polypeptide is Putative pre-16S rRNA nuclease (Streptococcus mutans serotype c (strain ATCC 700610 / UA159)).